A 126-amino-acid chain; its full sequence is Small ribosomal subunit protein bS6 (126 aa).

The interval 99–126 (PLPAPRVVPGTEAPEPAQAAETPEPEAS) is disordered. Low complexity predominate over residues 107–120 (PGTEAPEPAQAAET).

It belongs to the bacterial ribosomal protein bS6 family.

Binds together with bS18 to 16S ribosomal RNA. This Synechococcus sp. (strain CC9902) protein is Small ribosomal subunit protein bS6.